The chain runs to 201 residues: Transgelin (201 aa).

A2 bears the N-acetylalanine mark. Positions 24 to 137 (EELEERLVEW…RTLMALGSLA (114 aa)) constitute a Calponin-homology (CH) domain. S166 bears the Phosphoserine mark. At K172 the chain carries N6-acetyllysine. One copy of the Calponin-like repeat lies at 175 to 200 (IGLQMGSNRGASQAGMTGYGRPRQII). At S181 the chain carries Phosphoserine. R183 carries the omega-N-methylarginine modification.

It belongs to the calponin family.

The protein localises to the cytoplasm. Actin cross-linking/gelling protein. This Mus musculus (Mouse) protein is Transgelin (Tagln).